A 296-amino-acid chain; its full sequence is Ribosomal protein L11 methyltransferase (296 aa).

Residues T145, G166, D188, and N230 each coordinate S-adenosyl-L-methionine.

Belongs to the methyltransferase superfamily. PrmA family.

The protein resides in the cytoplasm. It carries out the reaction L-lysyl-[protein] + 3 S-adenosyl-L-methionine = N(6),N(6),N(6)-trimethyl-L-lysyl-[protein] + 3 S-adenosyl-L-homocysteine + 3 H(+). Its function is as follows. Methylates ribosomal protein L11. In Photorhabdus laumondii subsp. laumondii (strain DSM 15139 / CIP 105565 / TT01) (Photorhabdus luminescens subsp. laumondii), this protein is Ribosomal protein L11 methyltransferase.